The sequence spans 616 residues: MATIQSETDCYDIIEVLGKGTFGEVAKGWRRSTGEMVAIKILKNDAYRSRIIKNELKLLRCVRGLDPDEAHVIRFLEFFHDALKFYLVFELLEQNLFEFQKENNFAPLPARHIRTVTLQVLRALARLKELAIIHADLKPENIMLVDQTRCPFRVKVIDFGSASIFSEVRYVKEPYIQSRFYRAPEILLGLPFCEKVDVWSLGCVMAELHLGWPLYPGNNEYDQVRYICETQGLPKPHLLHAARKAHHFFKRNPHPDATNPWQLKSSADYLAETKVRPLERRKYMLKSLDQIETVNGGGAVSRLSFPDREALAEHADLKSMVELIKRMLTWESHERISPSAALRHPFVSMQQLRSAHEATRYYQLSLRGCRLSLQVDGKPPPPVIASAEDGPPYYRLAEEEETAGLGGVTGSGSFFREDKAPGMQRAIDQLDDLSLQEARRGLWSDTRADMVSDMLVPLKVASTSHRVPDSGPEPILAFYGSRLTGRHKARKAPAGSKSDSNFSNLIRLSQASPEDAGPCRGSGWEEGEGRTTSTEPSVIPQREGDGPGIKDRPMDAERPGPELFDPSSCPGEWLSEPEWTLEGIRGSRAQGLPAHHPHPHGPPRTTSFLQHVGGHH.

The Protein kinase domain occupies 11–347; it reads YDIIEVLGKG…PSAALRHPFV (337 aa). ATP is bound by residues 17 to 25 and Lys-40; that span reads LGKGTFGEV. Asp-136 serves as the catalytic Proton acceptor. Positions 487 to 616 are disordered; that stretch reads HKARKAPAGS…SFLQHVGGHH (130 aa). Over residues 497–512 the composition is skewed to polar residues; that stretch reads KSDSNFSNLIRLSQAS. At Ser-512 the chain carries Phosphoserine. Basic and acidic residues predominate over residues 542 to 560; the sequence is REGDGPGIKDRPMDAERPG.

Belongs to the protein kinase superfamily. CMGC Ser/Thr protein kinase family. HIPK subfamily. Post-translationally, autophosphorylated. As to expression, expressed at moderate levels in lung and white adipose tissues and weakly in brain and liver.

It localises to the cytoplasm. The enzyme catalyses L-seryl-[protein] + ATP = O-phospho-L-seryl-[protein] + ADP + H(+). It catalyses the reaction L-threonyl-[protein] + ATP = O-phospho-L-threonyl-[protein] + ADP + H(+). In terms of biological role, protein kinase that phosphorylates murine TP53 at Ser-9, and thus induces TP53 repression of BIRC5 promoter. May act as a corepressor of transcription factors (Potential). In Mus musculus (Mouse), this protein is Homeodomain-interacting protein kinase 4 (Hipk4).